We begin with the raw amino-acid sequence, 287 residues long: Nematocyst expressed protein 6 (287 aa).

A signal peptide spans 1–20 (MKGFIFAGVLVSALICLAEG). Positions 53–249 (RAALRDRYLW…RQTNLMYKCN (197 aa)) constitute a Peptidase M12A domain. 2 disulfide bridges follow: cysteine 95/cysteine 248 and cysteine 116/cysteine 139. Histidine 146 provides a ligand contact to Zn(2+). Glutamate 147 is a catalytic residue. 2 residues coordinate Zn(2+): histidine 150 and histidine 156. The interval 249 to 287 (NAQGDSELQPVNDEDEDKDGGDSKKKPDPKGPKPGEIEE) is disordered. The segment covering 268–287 (GGDSKKKPDPKGPKPGEIEE) has biased composition (basic and acidic residues).

Zn(2+) is required as a cofactor. Nematocyte and pharyngeal gland.

Its subcellular location is the secreted. It is found in the nematocyst. Metalloprotease. This is Nematocyst expressed protein 6 from Nematostella vectensis (Starlet sea anemone).